The primary structure comprises 550 residues: Chaperonin GroEL (550 aa).

ATP is bound by residues 30 to 33 (TLGP), lysine 51, 87 to 91 (DGTTT), glycine 415, and aspartate 496. A disordered region spans residues 526 to 550 (PEDEKMPPMPPGGGMGGMGGMGGMY). The segment covering 537–550 (GGGMGGMGGMGGMY) has biased composition (gly residues).

Belongs to the chaperonin (HSP60) family. In terms of assembly, forms a cylinder of 14 subunits composed of two heptameric rings stacked back-to-back. Interacts with the co-chaperonin GroES.

It localises to the cytoplasm. It catalyses the reaction ATP + H2O + a folded polypeptide = ADP + phosphate + an unfolded polypeptide.. Together with its co-chaperonin GroES, plays an essential role in assisting protein folding. The GroEL-GroES system forms a nano-cage that allows encapsulation of the non-native substrate proteins and provides a physical environment optimized to promote and accelerate protein folding. This chain is Chaperonin GroEL, found in Chloroherpeton thalassium (strain ATCC 35110 / GB-78).